A 155-amino-acid polypeptide reads, in one-letter code: uncharacterized protein (155 aa).

Positions 7-154 (LQINYKTLEE…VWLPESVELQ (148 aa)) constitute an N-acetyltransferase domain.

This is an uncharacterized protein from Brevibacillus brevis (strain 47 / JCM 6285 / NBRC 100599).